The following is a 165-amino-acid chain: Disulfide bond formation protein B (165 aa).

Residues 1-10 (MPAWLTNRTI) are Cytoplasmic-facing. Residues 11 to 27 (YFLCFLAIAGLMGFAFY) traverse the membrane as a helical segment. Residues 28–45 (LQYVKDLEPCPLCMAQRI) lie on the Periplasmic side of the membrane. C37 and C40 are disulfide-bonded. A helical transmembrane segment spans residues 46 to 62 (AFVLAGLVFLAAALHNP). The Cytoplasmic segment spans residues 63–68 (KNTGTT). Residues 69-86 (VYAFLGWVTTLGGAALAT) traverse the membrane as a helical segment. At 87 to 143 (RQLWLQSLPADQVPACGPGLEYMLEAFPFSEVLTMMLTGTGECAEVQWTFLGLSIPG) the chain is on the periplasmic side. A disulfide bond links C102 and C129. The helical transmembrane segment at 144-162 (WTLVAFIGFTAVWAFAWVR) threads the bilayer. The Cytoplasmic segment spans residues 163–165 (RPR).

The protein belongs to the DsbB family.

The protein localises to the cell inner membrane. Required for disulfide bond formation in some periplasmic proteins. Acts by oxidizing the DsbA protein. The sequence is that of Disulfide bond formation protein B from Hahella chejuensis (strain KCTC 2396).